The primary structure comprises 465 residues: 2-methylcitrate synthase, mitochondrial (465 aa).

The N-terminal 29 residues, 1-29 (MAMTMRSTRHASKLAQTARLALTNSRRYS), are a transit peptide targeting the mitochondrion. The CoA site is built by arginine 74 and lysine 192. Histidine 269 lines the oxaloacetate pocket. Residue leucine 304 coordinates CoA. Residue histidine 305 is part of the active site. CoA-binding residues include valine 346, glycine 348, and tyrosine 349. Residues histidine 351 and arginine 360 each coordinate oxaloacetate. Histidine 351 is an active-site residue. 3 residues coordinate CoA: threonine 400, lysine 401, and asparagine 406. The active site involves aspartate 408. Oxaloacetate is bound by residues arginine 434 and arginine 454.

Belongs to the citrate synthase family. Homodimer.

It is found in the mitochondrion matrix. The catalysed reaction is propanoyl-CoA + oxaloacetate + H2O = (2S,3S)-2-methylcitrate + CoA + H(+). It carries out the reaction oxaloacetate + acetyl-CoA + H2O = citrate + CoA + H(+). It functions in the pathway organic acid metabolism; propanoate degradation. Its function is as follows. Component of the methylcitrate cycle that catalyzes the synthesis of (2S,3S)-2-methylcitrate from propionyl-CoA and oxaloacetate. Plays an important role in detoxification of propionyl-CoA, an inhibitor of both primary and secondary metabolism. Also has citrate synthase activity using as substrates acetyl-CoA and oxaloacetate. Plays a key role in the estabishment of invasive pulmonary aspergillosis. This chain is 2-methylcitrate synthase, mitochondrial, found in Aspergillus fumigatus (strain CBS 144.89 / FGSC A1163 / CEA10) (Neosartorya fumigata).